We begin with the raw amino-acid sequence, 1030 residues long: Arrestin domain-containing protein F (1030 aa).

Disordered regions lie at residues methionine 1–arginine 27 and glutamate 119–leucine 154. Residues asparagine 128–threonine 137 are compositionally biased toward acidic residues. The span at asparagine 142–asparagine 152 shows a compositional bias: low complexity. Coiled-coil stretches lie at residues histidine 320–asparagine 374 and glutamine 544–glutamine 577. Disordered stretches follow at residues serine 539–serine 572 and asparagine 885–asparagine 931. Residues asparagine 547 to aspartate 562 are compositionally biased toward basic and acidic residues. Residues serine 910 to asparagine 931 show a composition bias toward low complexity.

The protein belongs to the arrestin family.

The protein is Arrestin domain-containing protein F (adcF) of Dictyostelium discoideum (Social amoeba).